A 225-amino-acid polypeptide reads, in one-letter code: Uracil-DNA glycosylase (225 aa).

D65 (proton acceptor) is an active-site residue.

It belongs to the uracil-DNA glycosylase (UDG) superfamily. UNG family.

The protein localises to the cytoplasm. It carries out the reaction Hydrolyzes single-stranded DNA or mismatched double-stranded DNA and polynucleotides, releasing free uracil.. Functionally, excises uracil residues from the DNA which can arise as a result of misincorporation of dUMP residues by DNA polymerase or due to deamination of cytosine. The protein is Uracil-DNA glycosylase of Bacillus cereus (strain ATCC 10987 / NRS 248).